Here is a 452-residue protein sequence, read N- to C-terminus: Cobyrinate a,c-diamide synthase (452 aa).

The GATase cobBQ-type domain maps to Thr246–Gln439. The active-site Nucleophile is the Cys328.

Belongs to the CobB/CbiA family. Requires Mg(2+) as cofactor.

It catalyses the reaction cob(II)yrinate + 2 L-glutamine + 2 ATP + 2 H2O = cob(II)yrinate a,c diamide + 2 L-glutamate + 2 ADP + 2 phosphate + 2 H(+). It functions in the pathway cofactor biosynthesis; adenosylcobalamin biosynthesis; cob(II)yrinate a,c-diamide from sirohydrochlorin (anaerobic route): step 10/10. Functionally, catalyzes the ATP-dependent amidation of the two carboxylate groups at positions a and c of cobyrinate, using either L-glutamine or ammonia as the nitrogen source. In Streptococcus sanguinis (strain SK36), this protein is Cobyrinate a,c-diamide synthase.